The sequence spans 148 residues: SsrA-binding protein (148 aa).

A disordered region spans residues 119 to 148 (AKGKKQHDKRETEKKRDWEREKARLMRSPG). The segment covering 126-142 (DKRETEKKRDWEREKAR) has biased composition (basic and acidic residues).

It belongs to the SmpB family.

The protein localises to the cytoplasm. Functionally, required for rescue of stalled ribosomes mediated by trans-translation. Binds to transfer-messenger RNA (tmRNA), required for stable association of tmRNA with ribosomes. tmRNA and SmpB together mimic tRNA shape, replacing the anticodon stem-loop with SmpB. tmRNA is encoded by the ssrA gene; the 2 termini fold to resemble tRNA(Ala) and it encodes a 'tag peptide', a short internal open reading frame. During trans-translation Ala-aminoacylated tmRNA acts like a tRNA, entering the A-site of stalled ribosomes, displacing the stalled mRNA. The ribosome then switches to translate the ORF on the tmRNA; the nascent peptide is terminated with the 'tag peptide' encoded by the tmRNA and targeted for degradation. The ribosome is freed to recommence translation, which seems to be the essential function of trans-translation. The sequence is that of SsrA-binding protein from Paraburkholderia xenovorans (strain LB400).